The chain runs to 507 residues: Cytochrome P450 monooxygenase tpeC (507 aa).

The chain crosses the membrane as a helical span at residues 24 to 44 (TLAIALIVGFVILKAIYNVFF). A heme-binding site is contributed by Cys-449.

This sequence belongs to the cytochrome P450 family. Requires heme as cofactor.

Its subcellular location is the membrane. Its pathway is secondary metabolite biosynthesis. Its function is as follows. Cytochrome P450 monooxygenase; part of the gene cluster that mediates the biosynthesis of polyesters containing 2,4-dihydroxy-6-(2-hydroxypropyl)benzoate and 3-hydroxybutyrate moieties, such as talapolyester G, 15G256beta and 15G256beta-2; as well as to oxidized derivatives such as 15G256alpha. The biosynthesis of the polyesters probably starts with the formation of the diketide 3-hydroxybutyryl-S-ACP catalyzed by the partially reducing polyketide synthase tpeA. The acceptance of 3-hydroxybutyryl by the non-reducing polyketide synthase tpeB would initiate further elongation and cyclization, catalyzed by KS and PT, respectively, to form 2,4-dihydroxy-6-(2-hydroxyn-propyl)benzoyl-S-ACP intermediate. The TE domain could catalyze lactonization at this step to yield 6-hydroxymellein as a derailment product. The polyesterification process maybe occurs when additional molecules of 3-hydroxybutyryl are transferred to tpeB. Following the first esterification step, an intramolecular cyclization catalyzed by the TE domain of tpeB would give talarodioxadione 1, whereas the ethyl esterification of talapolyester G perhaps happens spontaneously. Further oxidation by the cytochrome P450 monooxygenase tpeC then leads to the formation of oxidized derivatives. The chain is Cytochrome P450 monooxygenase tpeC from Talaromyces stipitatus (strain ATCC 10500 / CBS 375.48 / QM 6759 / NRRL 1006) (Penicillium stipitatum).